A 93-amino-acid polypeptide reads, in one-letter code: Ferredoxin-2 (93 aa).

The 2Fe-2S ferredoxin-type domain maps to Tyr-2–Asp-91. Cys-37, Cys-42, Cys-45, and Cys-75 together coordinate [2Fe-2S] cluster.

It belongs to the 2Fe2S plant-type ferredoxin family. The cofactor is [2Fe-2S] cluster.

Its subcellular location is the plastid. It is found in the chloroplast. Ferredoxins are iron-sulfur proteins that transfer electrons in a wide variety of metabolic reactions. This chain is Ferredoxin-2, found in Equisetum arvense (Field horsetail).